The sequence spans 282 residues: Phospholipid phosphatase 1 (282 aa).

Residues 1–6 (MFDKPR) lie on the Cytoplasmic side of the membrane. A PDZ-binding; involved in localization to the apical cell membrane motif is present at residues 5–7 (PRL). A helical membrane pass occupies residues 7–27 (LPYVVLDVICVLLAGLPFIIL). Over 28–53 (TSRHTPFQRGVFCTDESIKYPYREDT) the chain is Extracellular. Residues 54 to 74 (IPYALLGGIVIPFCIIVMITG) form a helical membrane-spanning segment. Residues 75–88 (ETLSVYFNVLHSNS) are Cytoplasmic-facing. The helical transmembrane segment at 89 to 109 (FVSNHYIATIYKAVGAFLFGA) threads the bilayer. Over 110–164 (SASQSLTDIAKYSIGRLRPHFLAVCNPDWSKINCSDGYIENFVCQGNEQKVREGR) the chain is Extracellular. The phosphatase sequence motif I stretch occupies residues 120–128 (KYSIGRLRP). Asparagine 142 carries N-linked (GlcNAc...) asparagine glycosylation. Residues 165-185 (LSFYSGHSSFSMYCMLFVALY) traverse the membrane as a helical segment. Positions 168–171 (YSGH) are phosphatase sequence motif II. Histidine 171 (proton donors) is an active-site residue. Residues 186 to 194 (LQARMKGDW) lie on the Cytoplasmic side of the membrane. The helical transmembrane segment at 195-215 (ARLLRPMLQFGLVALSIYVGL) threads the bilayer. The phosphatase sequence motif III stretch occupies residues 216-227 (SRVSDYKHHWSD). At 216–229 (SRVSDYKHHWSDVL) the chain is on the extracellular side. Catalysis depends on histidine 223, which acts as the Nucleophile. Residues 230 to 250 (IGLIQGAVVAILVVLYVTDFF) traverse the membrane as a helical segment. Residues 251–282 (KTTESNKERKEDSHTTLHETTNRQSYARNHEP) lie on the Cytoplasmic side of the membrane. A compositionally biased stretch (basic and acidic residues) spans 257–271 (KERKEDSHTTLHETT). The tract at residues 257 to 282 (KERKEDSHTTLHETTNRQSYARNHEP) is disordered. Residues 272-282 (NRQSYARNHEP) show a composition bias toward polar residues.

This sequence belongs to the PA-phosphatase related phosphoesterase family. Forms functional homodimers and homooligomers that are not required for substrate recognition and catalytic activity. Can also form heterooligomers with PLPP2 and PLPP3. N-glycosylated. N-linked sugars are of the complex type. N-glycosylation is not required for the phosphatase activity.

It localises to the cell membrane. Its subcellular location is the apical cell membrane. The protein localises to the membrane raft. The protein resides in the membrane. It is found in the caveola. The enzyme catalyses a 1,2-diacyl-sn-glycero-3-phosphate + H2O = a 1,2-diacyl-sn-glycerol + phosphate. It catalyses the reaction 1,2-dihexadecanoyl-sn-glycero-3-phosphate + H2O = 1,2-dihexadecanoyl-sn-glycerol + phosphate. It carries out the reaction 1,2-di-(9Z-octadecenoyl)-sn-glycero-3-phosphate + H2O = 1,2-di-(9Z-octadecenoyl)-sn-glycerol + phosphate. The catalysed reaction is a monoacyl-sn-glycero-3-phosphate + H2O = a monoacylglycerol + phosphate. The enzyme catalyses (9Z)-octadecenoyl-sn-glycero-3-phosphate + H2O = (9Z-octadecenoyl)-glycerol + phosphate. It catalyses the reaction a 1-acyl-sn-glycero-3-phosphate + H2O = a 1-acyl-sn-glycerol + phosphate. It carries out the reaction 1-(9Z-octadecenoyl)-sn-glycero-3-phosphate + H2O = 1-(9Z-octadecenoyl)-sn-glycerol + phosphate. The catalysed reaction is a 1,2-diacyl-sn-glycerol 3-diphosphate + H2O = a 1,2-diacyl-sn-glycero-3-phosphate + phosphate + H(+). The enzyme catalyses sphing-4-enine 1-phosphate + H2O = sphing-4-enine + phosphate. It catalyses the reaction an N-acylsphing-4-enine 1-phosphate + H2O = an N-acylsphing-4-enine + phosphate. It carries out the reaction N-(octanoyl)-sphing-4-enine-1-phosphate + H2O = N-octanoylsphing-4-enine + phosphate. The catalysed reaction is N-(9Z-octadecenoyl)-ethanolamine phosphate + H2O = N-(9Z-octadecenoyl) ethanolamine + phosphate. The enzyme catalyses 1-hexadecanoyl-2-(9Z-octadecenoyl)-sn-glycero-3-phosphate + H2O = 1-hexadecanoyl-2-(9Z-octadecenoyl)-sn-glycerol + phosphate. The protein operates within lipid metabolism; phospholipid metabolism. Magnesium-independent phospholipid phosphatase. Insensitive to N-ethylmaleimide. Functionally, magnesium-independent phospholipid phosphatase of the plasma membrane that catalyzes the dephosphorylation of a variety of glycerolipid and sphingolipid phosphate esters including phosphatidate/PA, lysophosphatidate/LPA, diacylglycerol pyrophosphate/DGPP, sphingosine 1-phosphate/S1P and ceramide 1-phosphate/C1P. Also acts on N-oleoyl ethanolamine phosphate/N-(9Z-octadecenoyl)-ethanolamine phosphate, a potential physiological compound. Through its extracellular phosphatase activity allows both the hydrolysis and the cellular uptake of these bioactive lipid mediators from the milieu, regulating signal transduction in different cellular processes. It is for instance essential for the extracellular hydrolysis of S1P and subsequent conversion into intracellular S1P. Involved in the regulation of inflammation, platelets activation, cell proliferation and migration among other processes. May also have an intracellular activity to regulate phospholipid-mediated signaling pathways. This is Phospholipid phosphatase 1 from Rattus norvegicus (Rat).